A 215-amino-acid chain; its full sequence is Large ribosomal subunit protein uL4 (215 aa).

Positions 43–101 are disordered; it reads HQRQGTSKTKERGEVRGSGRKLYRQKGTGNARVGDAQSPIRRGGGRAHGARPRDYAHDL. Positions 50–59 are enriched in basic and acidic residues; sequence KTKERGEVRG.

It belongs to the universal ribosomal protein uL4 family. Part of the 50S ribosomal subunit.

Functionally, one of the primary rRNA binding proteins, this protein initially binds near the 5'-end of the 23S rRNA. It is important during the early stages of 50S assembly. It makes multiple contacts with different domains of the 23S rRNA in the assembled 50S subunit and ribosome. Its function is as follows. Forms part of the polypeptide exit tunnel. This chain is Large ribosomal subunit protein uL4, found in Salinibacter ruber (strain DSM 13855 / M31).